The chain runs to 401 residues: Succinyl-diaminopimelate desuccinylase (401 aa).

Residue His-82 participates in Zn(2+) binding. Asp-84 is a catalytic residue. A Zn(2+)-binding site is contributed by Asp-115. Glu-149 serves as the catalytic Proton acceptor. Zn(2+)-binding residues include Glu-150, Glu-178, and His-364.

Belongs to the peptidase M20A family. DapE subfamily. As to quaternary structure, homodimer. Zn(2+) serves as cofactor. It depends on Co(2+) as a cofactor.

The catalysed reaction is N-succinyl-(2S,6S)-2,6-diaminopimelate + H2O = (2S,6S)-2,6-diaminopimelate + succinate. Its pathway is amino-acid biosynthesis; L-lysine biosynthesis via DAP pathway; LL-2,6-diaminopimelate from (S)-tetrahydrodipicolinate (succinylase route): step 3/3. Its function is as follows. Catalyzes the hydrolysis of N-succinyl-L,L-diaminopimelic acid (SDAP), forming succinate and LL-2,6-diaminopimelate (DAP), an intermediate involved in the bacterial biosynthesis of lysine and meso-diaminopimelic acid, an essential component of bacterial cell walls. In Verminephrobacter eiseniae (strain EF01-2), this protein is Succinyl-diaminopimelate desuccinylase.